We begin with the raw amino-acid sequence, 423 residues long: Limonoid 21-O-acetyltransferse (423 aa).

Catalysis depends on proton acceptor residues His152 and Asp362.

Belongs to the plant acyltransferase family. In terms of assembly, monomer. Mainly expressed in petioles.

It catalyses the reaction isomeliandiol + acetyl-CoA = 21-O-acetyl-isomeliandiol + CoA. Its pathway is secondary metabolite biosynthesis; terpenoid biosynthesis. Acetyltransferase involved in the biosynthesis of limonoids triterpene natural products such as azadirachtin, an antifeedant widely used as bioinsecticide, and possessing many medicinal applications including anti-tumoral, anti-malarial, anti-rheumatic, antibacterial, anti-inflammatory, anti-pyretic and diuretic effects. Catalyzes the formation of 21-O-acetyl-isomeliandiol from isomeliandiol. The chain is Limonoid 21-O-acetyltransferse from Melia azedarach (Chinaberry tree).